The chain runs to 301 residues: Probable alpha-L-glutamate ligase 1 (301 aa).

The region spanning 104-287 (MQLMSRRGIG…VAGAIIAFIE (184 aa)) is the ATP-grasp domain. ATP contacts are provided by residues Lys141, 178–179 (EY), Asp187, and 211–213 (RSN). Mg(2+)-binding residues include Asp248, Glu260, and Asn262. Positions 248, 260, and 262 each coordinate Mn(2+).

Belongs to the RimK family. Mg(2+) serves as cofactor. Requires Mn(2+) as cofactor.

The polypeptide is Probable alpha-L-glutamate ligase 1 (Shewanella amazonensis (strain ATCC BAA-1098 / SB2B)).